We begin with the raw amino-acid sequence, 453 residues long: Ribulose bisphosphate carboxylase large chain (453 aa).

Positions 1 to 2 (MS) are excised as a propeptide. P3 is modified (N-acetylproline). The residue at position 14 (K14) is an N6,N6,N6-trimethyllysine. Substrate is bound by residues N123 and T173. K175 (proton acceptor) is an active-site residue. Substrate is bound at residue K177. Mg(2+) contacts are provided by K201, D203, and E204. An N6-carboxylysine modification is found at K201. H294 acts as the Proton acceptor in catalysis. Substrate contacts are provided by R295, H327, and S379.

The protein belongs to the RuBisCO large chain family. Type I subfamily. As to quaternary structure, heterohexadecamer of 8 large chains and 8 small chains; disulfide-linked. The disulfide link is formed within the large subunit homodimers. It depends on Mg(2+) as a cofactor. In terms of processing, the disulfide bond which can form in the large chain dimeric partners within the hexadecamer appears to be associated with oxidative stress and protein turnover.

Its subcellular location is the plastid. The protein localises to the chloroplast. The catalysed reaction is 2 (2R)-3-phosphoglycerate + 2 H(+) = D-ribulose 1,5-bisphosphate + CO2 + H2O. The enzyme catalyses D-ribulose 1,5-bisphosphate + O2 = 2-phosphoglycolate + (2R)-3-phosphoglycerate + 2 H(+). RuBisCO catalyzes two reactions: the carboxylation of D-ribulose 1,5-bisphosphate, the primary event in carbon dioxide fixation, as well as the oxidative fragmentation of the pentose substrate in the photorespiration process. Both reactions occur simultaneously and in competition at the same active site. This is Ribulose bisphosphate carboxylase large chain from Galium aparine (Catchweed bedstraw).